The sequence spans 338 residues: Mas-related G-protein coupled receptor member B2 (338 aa).

Over 1–40 (MSGDFLIKNLSTSAWKTNITVLNGSYYIDTSVCVTRNQAM) the chain is Extracellular. 3 N-linked (GlcNAc...) asparagine glycosylation sites follow: Asn-9, Asn-18, and Asn-23. The helical transmembrane segment at 41 to 61 (ILLSIIISLVGMGLNAIVLWF) threads the bilayer. Topologically, residues 62 to 89 (LGIRMHTNAFTVYILNLAMADFLYLCSQ) are cytoplasmic. A helical transmembrane segment spans residues 90–110 (FVICLLIAFYIFYSIDINIPL). Residue Val-111 is a topological domain, extracellular. Residues 112 to 132 (LYVVPIFAYLSGLSILSTISI) form a helical membrane-spanning segment. The Cytoplasmic portion of the chain corresponds to 133 to 157 (ERCLSVIWPIWYRCKRPRHTSAITC). The helical transmembrane segment at 158-178 (FVLWVMSLLLGLLEGKACGLL) threads the bilayer. Residues 179 to 191 (FNSFDSYWCETFD) are Extracellular-facing. A helical transmembrane segment spans residues 192–212 (VITNIWSVVFFGVLCGSSLTL). At 213 to 231 (LVRIFCGSQRIPMTRLYVT) the chain is on the cytoplasmic side. A helical membrane pass occupies residues 232-252 (ITLTVLVFLIFGLPFGIYWIL). Over 253-268 (YQWISNFYYVEICNFY) the chain is Extracellular. A helical transmembrane segment spans residues 269–289 (LEILFLSCVNSCMNPIIYFLV). Residues 290-338 (GSIRHRRFRRKTLKLLLQRAMQDTPEEEQSGNKSSSEHPEELETVQSCS) are Cytoplasmic-facing. A disordered region spans residues 310-338 (MQDTPEEEQSGNKSSSEHPEELETVQSCS).

The protein belongs to the G-protein coupled receptor 1 family. Mas subfamily. In terms of tissue distribution, mast cell-specific.

The protein localises to the cell membrane. Its function is as follows. Mast cell-specific receptor for basic secretagogues, i.e. cationic amphiphilic drugs, as well as endo- or exogenous peptides, consisting of a basic head group and a hydrophobic core. Recognizes and binds small molecules containing a cyclized tetrahydroisoquinoline (THIQ), such as non-steroidal neuromuscular blocking drugs (NMBDs), including tubocurarine and atracurium. In response to these compounds, mediates pseudo-allergic reactions characterized by histamine release, inflammation and airway contraction. The chain is Mas-related G-protein coupled receptor member B2 (Mrgprb2) from Mus musculus (Mouse).